The primary structure comprises 123 residues: Gamma-synuclein (123 aa).

2 repeat units span residues 20–30 (EKTKQGVTEAA) and 31–41 (EKTKEGVMYVG). The tract at residues 20–67 (EKTKQGVTEAAEKTKEGVMYVGTKTKGERGTSVTSVAEKTKEQANAVS) is 4 X 11 AA tandem repeats of [EGSA]-K-T-K-[EQ]-[GQ]-V-X(4). The stretch at 42–56 (TKTKGERGTSVTSVA) is one 3; approximate repeat. Repeat unit 4 spans residues 57–67 (EKTKEQANAVS). Ser-67 and Ser-72 each carry phosphoserine. The disordered stretch occupies residues 93-123 (GVVRKEDLEPPAQDQEAKEQEEGEEAKSGGD). The span at 107–123 (QEAKEQEEGEEAKSGGD) shows a compositional bias: basic and acidic residues. The residue at position 120 (Ser-120) is a Phosphoserine; by BARK1, CaMK2 and CK2.

This sequence belongs to the synuclein family. May be a centrosome-associated protein. Interacts with MYOC; affects its secretion and its aggregation. In terms of processing, phosphorylated. Phosphorylation by GRK5 appears to occur on residues distinct from the residue phosphorylated by other kinases. In terms of tissue distribution, specifically expressed in the peripheral nervous system. High expression in motoneurons of the brainstem. Also found in neurons of many other brain regions including the cerebellar cortex, thalamus, hypothalamus and CA1, CA2, CA3 and CA4 regions of the hippocampus.

The protein localises to the cytoplasm. It localises to the perinuclear region. Its subcellular location is the cytoskeleton. It is found in the microtubule organizing center. The protein resides in the centrosome. The protein localises to the spindle. Plays a role in neurofilament network integrity. May be involved in modulating axonal architecture during development and in the adult. In vitro, increases the susceptibility of neurofilament-H to calcium-dependent proteases. May also function in modulating the keratin network in skin. Activates the MAPK and Elk-1 signal transduction pathway. The protein is Gamma-synuclein (Sncg) of Rattus norvegicus (Rat).